A 722-amino-acid chain; its full sequence is WD repeat-containing and planar cell polarity effector protein fritz homolog (722 aa).

WD repeat units lie at residues 305–343 (LRSKAISCCRNSTEDKLIVGCEDSSVILYEAHRGVTLLA) and 344–383 (QAELRPSLISCHPSGAILLVGSNQGELQIFDIALSPINIQ). The interval 655 to 710 (IPNGPSSRWAIERRTEEEEEEEEEEEEELCTDSSGATTWNAEGELKEDQRKQDIGD) is disordered. Residues 671–684 (EEEEEEEEEEEELC) are compositionally biased toward acidic residues. Over residues 685-694 (TDSSGATTWN) the composition is skewed to polar residues. Over residues 697–708 (GELKEDQRKQDI) the composition is skewed to basic and acidic residues.

The protein belongs to the WD repeat fritz family. In terms of assembly, component of the CPLANE (ciliogenesis and planar polarity effectors) complex, composed of INTU, FUZ and WDPCP. Interacts with CPLANE1.

The protein localises to the cell membrane. Its subcellular location is the cytoplasm. The protein resides in the cytoskeleton. It is found in the cilium axoneme. It localises to the cilium basal body. In terms of biological role, probable effector of the planar cell polarity signaling pathway which regulates the septin cytoskeleton in both ciliogenesis and collective cell movements. Together with FUZ and WDPCP proposed to function as core component of the CPLANE (ciliogenesis and planar polarity effectors) complex involved in the recruitment of peripheral IFT-A proteins to basal bodies. Binds phosphatidylinositol 3-phosphate with highest affinity, followed by phosphatidylinositol 4-phosphate and phosphatidylinositol 5-phosphate. The protein is WD repeat-containing and planar cell polarity effector protein fritz homolog (Wdpcp) of Mus musculus (Mouse).